The following is a 729-amino-acid chain: Glycine--tRNA ligase (729 aa).

A mitochondrion-targeting transit peptide spans 1–33; it reads MPCLLPSLLRATRAALPLLSPPRVVAASASQRL. The WHEP-TRS domain occupies 53 to 109; that stretch reads LLAPLRLAVRQQGDFVRKLKEDKAPQVDVDRAVAELKARKRVLEAKELALQPKDDIV. Lys-194 bears the N6-acetyllysine mark. Residue Glu-289 participates in glycine binding. ATP-binding positions include 321–323 and 332–333; these read RNE and RV. Glu-340 is a binding site for glycine. Tyr-443 is modified (phosphotyrosine). 447-448 serves as a coordination point for ATP; it reads EI. Lys-491 bears the N6-acetyllysine mark. 566–568 lines the glycine pocket; sequence EPS. Arg-573 contacts ATP. Phosphoserine is present on Ser-690. Thr-726 is subject to Phosphothreonine.

The protein belongs to the class-II aminoacyl-tRNA synthetase family. In terms of assembly, homodimer.

The protein localises to the cytoplasm. It localises to the mitochondrion. The protein resides in the cell projection. Its subcellular location is the axon. It is found in the secreted. The protein localises to the extracellular exosome. The enzyme catalyses tRNA(Gly) + glycine + ATP = glycyl-tRNA(Gly) + AMP + diphosphate. The catalysed reaction is 2 ATP + H(+) = P(1),P(4)-bis(5'-adenosyl) tetraphosphate + diphosphate. Functionally, catalyzes the ATP-dependent ligation of glycine to the 3'-end of its cognate tRNA, via the formation of an aminoacyl-adenylate intermediate (Gly-AMP). Also produces diadenosine tetraphosphate (Ap4A), a universal pleiotropic signaling molecule needed for cell regulation pathways, by direct condensation of 2 ATPs. Thereby, may play a special role in Ap4A homeostasis. The sequence is that of Glycine--tRNA ligase (Gars1) from Mus musculus (Mouse).